The chain runs to 428 residues: 3-phosphoshikimate 1-carboxyvinyltransferase (428 aa).

Residues Lys-21, Ser-22, and Arg-26 each contribute to the 3-phosphoshikimate site. Residue Lys-21 coordinates phosphoenolpyruvate. The phosphoenolpyruvate site is built by Gly-91 and Arg-119. 3-phosphoshikimate-binding residues include Ser-164, Gln-166, Asp-313, and Lys-340. Position 166 (Gln-166) interacts with phosphoenolpyruvate. Residue Asp-313 is the Proton acceptor of the active site. Phosphoenolpyruvate is bound by residues Arg-344 and Arg-386.

It belongs to the EPSP synthase family. As to quaternary structure, monomer.

It localises to the cytoplasm. The enzyme catalyses 3-phosphoshikimate + phosphoenolpyruvate = 5-O-(1-carboxyvinyl)-3-phosphoshikimate + phosphate. It functions in the pathway metabolic intermediate biosynthesis; chorismate biosynthesis; chorismate from D-erythrose 4-phosphate and phosphoenolpyruvate: step 6/7. Catalyzes the transfer of the enolpyruvyl moiety of phosphoenolpyruvate (PEP) to the 5-hydroxyl of shikimate-3-phosphate (S3P) to produce enolpyruvyl shikimate-3-phosphate and inorganic phosphate. The sequence is that of 3-phosphoshikimate 1-carboxyvinyltransferase from Campylobacter jejuni (strain RM1221).